The following is a 424-amino-acid chain: Virion nicking-joining enzyme (424 aa).

2 PLD phosphodiesterase domains span residues 110–137 (LGGV…DWRS) and 320–346 (YSRV…TGNY).

Belongs to the orthopoxvirus OPG042 family.

Its subcellular location is the virion. Its function is as follows. DNA nicking enzyme that cleaves extruded cruciform DNA at its tip. Probably nicks viral hairpins. This chain is Virion nicking-joining enzyme (OPG042), found in Homo sapiens (Human).